Reading from the N-terminus, the 331-residue chain is Putative serine/threonine-protein kinase ZK507.1 (331 aa).

Residues 1 to 270 (MKVNEEGFAI…CKLTLKEPLV (270 aa)) form the Protein kinase domain. Catalysis depends on Asp116, which acts as the Proton acceptor. Residues 302–314 (SDRNEENSLDRSK) are compositionally biased toward basic and acidic residues. Residues 302-331 (SDRNEENSLDRSKTGTLSFNNSKNKKPSRY) form a disordered region.

This sequence belongs to the protein kinase superfamily. Ser/Thr protein kinase family.

It carries out the reaction L-seryl-[protein] + ATP = O-phospho-L-seryl-[protein] + ADP + H(+). The catalysed reaction is L-threonyl-[protein] + ATP = O-phospho-L-threonyl-[protein] + ADP + H(+). The polypeptide is Putative serine/threonine-protein kinase ZK507.1 (Caenorhabditis elegans).